Consider the following 243-residue polypeptide: Probable flavin-dependent thymidylate synthase (243 aa).

Residues 21–239 (FEVDDFEESK…PNTYQDIPDV (219 aa)) enclose the ThyX domain. Residues Ser-80 and 103–105 (RHR) contribute to the FAD site. DUMP-binding positions include 100 to 103 (ELER), 113 to 115 (SQR), and Arg-178. A ThyX motif motif is present at residues 103–113 (RHRHLSFSVVS). An FAD-binding site is contributed by 194–196 (NHR). DUMP is bound at residue Arg-205. Residue Arg-205 is the Involved in ionization of N3 of dUMP, leading to its activation of the active site.

The protein belongs to the thymidylate synthase ThyX family. In terms of assembly, homotetramer. The cofactor is FAD.

It catalyses the reaction dUMP + (6R)-5,10-methylene-5,6,7,8-tetrahydrofolate + NADPH + H(+) = dTMP + (6S)-5,6,7,8-tetrahydrofolate + NADP(+). Its pathway is pyrimidine metabolism; dTTP biosynthesis. Functionally, catalyzes the reductive methylation of 2'-deoxyuridine-5'-monophosphate (dUMP) to 2'-deoxythymidine-5'-monophosphate (dTMP) while utilizing 5,10-methylenetetrahydrofolate (mTHF) as the methyl donor, and NADPH and FADH(2) as the reductant. This is Probable flavin-dependent thymidylate synthase (48) from Mycobacterium phage L5 (Mycobacteriophage L5).